The sequence spans 529 residues: Peptide chain release factor 3 (529 aa).

Residues 7–275 form the tr-type G domain; the sequence is EQRRTFGIIS…AVVELAPSPR (269 aa). GTP-binding positions include 16–23, 84–88, and 138–141; these read SHPDAGKT, DTPGH, and NKLD.

It belongs to the TRAFAC class translation factor GTPase superfamily. Classic translation factor GTPase family. PrfC subfamily.

It is found in the cytoplasm. In terms of biological role, increases the formation of ribosomal termination complexes and stimulates activities of RF-1 and RF-2. It binds guanine nucleotides and has strong preference for UGA stop codons. It may interact directly with the ribosome. The stimulation of RF-1 and RF-2 is significantly reduced by GTP and GDP, but not by GMP. This is Peptide chain release factor 3 from Syntrophus aciditrophicus (strain SB).